Here is a 432-residue protein sequence, read N- to C-terminus: 23S rRNA (uracil(1939)-C(5))-methyltransferase RlmD (432 aa).

One can recognise a TRAM domain in the interval Met-1 to Ala-54. [4Fe-4S] cluster is bound by residues Cys-67, Cys-73, Cys-76, and Cys-155. S-adenosyl-L-methionine is bound by residues Gln-264, Phe-293, Asn-298, Glu-314, Asn-341, and Asp-362. The Nucleophile role is filled by Cys-389.

This sequence belongs to the class I-like SAM-binding methyltransferase superfamily. RNA M5U methyltransferase family. RlmD subfamily.

The enzyme catalyses uridine(1939) in 23S rRNA + S-adenosyl-L-methionine = 5-methyluridine(1939) in 23S rRNA + S-adenosyl-L-homocysteine + H(+). Functionally, catalyzes the formation of 5-methyl-uridine at position 1939 (m5U1939) in 23S rRNA. The chain is 23S rRNA (uracil(1939)-C(5))-methyltransferase RlmD from Thiobacillus denitrificans (strain ATCC 25259 / T1).